The sequence spans 244 residues: LOB domain-containing protein 17 (244 aa).

The LOB domain maps to 6–108; it reads SPCGACKFLR…TQLEILKQQA (103 aa).

The protein belongs to the LOB domain-containing protein family. As to expression, expressed in roots, stems, leaves and flowers.

This Arabidopsis thaliana (Mouse-ear cress) protein is LOB domain-containing protein 17 (LBD17).